A 565-amino-acid polypeptide reads, in one-letter code: NAD-dependent malic enzyme (565 aa).

Catalysis depends on Tyr-104, which acts as the Proton donor. Arg-157 provides a ligand contact to NAD(+). The active-site Proton acceptor is the Lys-175. A divalent metal cation is bound by residues Glu-246, Asp-247, and Asp-270. NAD(+)-binding residues include Asp-270 and Asn-418.

This sequence belongs to the malic enzymes family. In terms of assembly, homotetramer. Requires Mg(2+) as cofactor. It depends on Mn(2+) as a cofactor.

It catalyses the reaction (S)-malate + NAD(+) = pyruvate + CO2 + NADH. The catalysed reaction is oxaloacetate + H(+) = pyruvate + CO2. The chain is NAD-dependent malic enzyme from Yersinia enterocolitica serotype O:8 / biotype 1B (strain NCTC 13174 / 8081).